The chain runs to 403 residues: uncharacterized protein (403 aa).

The next 2 membrane-spanning stretches (helical) occupy residues 29–49 and 55–75; these read FVIFSVLFSLIIGFIASCGFL and AFIASGLCFALLVSVVSFFGC.

Belongs to the chlamydial CPn_0129/CT_036/TC_0306 family.

It is found in the cell membrane. This is an uncharacterized protein from Chlamydia trachomatis serovar D (strain ATCC VR-885 / DSM 19411 / UW-3/Cx).